The following is a 210-amino-acid chain: Large ribosomal subunit protein uL16 (210 aa).

The protein belongs to the universal ribosomal protein uL16 family. In terms of assembly, component of the large ribosomal subunit. Mature ribosomes consist of a small (40S) and a large (60S) subunit. The 40S subunit contains about 33 different proteins and 1 molecule of RNA (18S). The 60S subunit contains about 49 different proteins and 3 molecules of RNA (28S, 5.8S and 5S).

The protein resides in the cytoplasm. In terms of biological role, component of the large ribosomal subunit. Plays a role in the formation of actively translating ribosomes. Its function is as follows. (Microbial infection) Seems to bind to the leucine zipper of viral and cellular JUN. The chain is Large ribosomal subunit protein uL16 from Gallus gallus (Chicken).